The primary structure comprises 84 residues: Small ribosomal subunit protein uS17 (84 aa).

Belongs to the universal ribosomal protein uS17 family. As to quaternary structure, part of the 30S ribosomal subunit.

In terms of biological role, one of the primary rRNA binding proteins, it binds specifically to the 5'-end of 16S ribosomal RNA. The chain is Small ribosomal subunit protein uS17 from Borreliella burgdorferi (strain ATCC 35210 / DSM 4680 / CIP 102532 / B31) (Borrelia burgdorferi).